A 464-amino-acid chain; its full sequence is Soluble pyridine nucleotide transhydrogenase (464 aa).

FAD is bound at residue 35–44 (DNRPLVGGNC).

It belongs to the class-I pyridine nucleotide-disulfide oxidoreductase family. FAD serves as cofactor.

It localises to the cytoplasm. The enzyme catalyses NAD(+) + NADPH = NADH + NADP(+). Functionally, conversion of NADPH, generated by peripheral catabolic pathways, to NADH, which can enter the respiratory chain for energy generation. This Stutzerimonas stutzeri (strain A1501) (Pseudomonas stutzeri) protein is Soluble pyridine nucleotide transhydrogenase.